A 174-amino-acid polypeptide reads, in one-letter code: Chaperonin-like RBCX protein 1, chloroplastic (174 aa).

The transit peptide at Met1–Asn45 directs the protein to the chloroplast.

It belongs to the RbcX family. Homodimer. Interacts with rbcL, atpB and THI1.

Its subcellular location is the plastid. It is found in the chloroplast. Its function is as follows. Chaperone involved in RuBisCO assembly process. This is Chaperonin-like RBCX protein 1, chloroplastic from Arabidopsis thaliana (Mouse-ear cress).